A 267-amino-acid polypeptide reads, in one-letter code: B3 domain-containing protein At3g11580 (267 aa).

The segment at residues 29-143 (FEKSLTPSDV…RLFIGWRRRG (115 aa)) is a DNA-binding region (TF-B3).

The protein localises to the nucleus. The polypeptide is B3 domain-containing protein At3g11580 (ARF32) (Arabidopsis thaliana (Mouse-ear cress)).